We begin with the raw amino-acid sequence, 880 residues long: MMLKFIKSIFKTPSDRIIANLKSKIQQVHSAESSLAKLSNIELRNKTSEFKARLANNEPIDNIQYEAFAVVREAAKRTIGIQHYDEQLIGGILLHQGKVIEMSTGEGKTLVATLPSYLNALMGKGVHVVTVNDYLAQRDSDWMGTIHRFLDITVGCITSNTNEHARKIAYNSDITYITNNELGFDFLRDNMQFTNQSKVQRGCNYAIIDEIDSILIDEARTPLIISGPVSDNTSLYPIINKLITKLNKDDYEMDEKLRNVTLTDLGINKLETMLAEINILAPNSNSLYDFENMHLIHYINQSLKAHTLFRRNVDYLVKNGKVIIIDEFTGRTMDSRRYSEGLHQALEAKEKVEIQNENQTLASITFQNYFRMYTKLSGMTGTAMTEATELKEIYDLDVVTVPTHNPVQRIDYDDEIYSTKKDKYSAIIQLIQECYSKGQPVLVGTVSIEKSEELSKLLHSKKIPHNVLNAKHHDKEASIIAQAGRIKAITIATNMAGRGTDIMLGGNAEMLVDQSNLTEEEYQEKLKITKMQIEQEKEQVINAGGLFVIGTERHESRRIDNQLRGRCGRQGDPGQTKFFLSLEDDLMRIFASDRVTNILRTIGLKDGEAIHHPLINRSLATAQQKIEAQNYEIRKNLLKYDNVMNDQRKVIYEQRNEAISSDNVNEILHNLTEELIVETVHKFIPPKSYKEDWNIHGLVKEYHHIFNVKLQLDSIEATDSSLKVIEYLTKTAFDIYKQQEQDYSAKSANEAIKHIFIKTLDQTWKEHLYTLDHLKQGISLRAYGQKDPLNEYKREAFDLFKQMLLHLKYLFIQRVARLHIDLASSPKSTSSLLETSDNNLKSKIITENSMAHKYFGKISRNQLCPCNSGKKFKHCHGALK.

Residues Gln87, Gly105–Thr109, and Asp501 each bind ATP. The Zn(2+) site is built by Cys864, Cys866, Cys875, and His876.

It belongs to the SecA family. Monomer and homodimer. Part of the essential Sec protein translocation apparatus which comprises SecA, SecYEG and auxiliary proteins SecDF-YajC and YidC. The cofactor is Zn(2+).

The protein resides in the cell inner membrane. It localises to the cytoplasm. It carries out the reaction ATP + H2O + cellular proteinSide 1 = ADP + phosphate + cellular proteinSide 2.. In terms of biological role, part of the Sec protein translocase complex. Interacts with the SecYEG preprotein conducting channel. Has a central role in coupling the hydrolysis of ATP to the transfer of proteins into and across the cell membrane, serving both as a receptor for the preprotein-SecB complex and as an ATP-driven molecular motor driving the stepwise translocation of polypeptide chains across the membrane. This Orientia tsutsugamushi (strain Boryong) (Rickettsia tsutsugamushi) protein is Protein translocase subunit SecA.